The chain runs to 451 residues: Phosphoglucosamine mutase (451 aa).

The Phosphoserine intermediate role is filled by Ser102. Mg(2+)-binding residues include Ser102, Asp242, Asp244, and Asp246. Phosphoserine is present on Ser102.

It belongs to the phosphohexose mutase family. Requires Mg(2+) as cofactor. Post-translationally, activated by phosphorylation.

The enzyme catalyses alpha-D-glucosamine 1-phosphate = D-glucosamine 6-phosphate. Its function is as follows. Catalyzes the conversion of glucosamine-6-phosphate to glucosamine-1-phosphate. The polypeptide is Phosphoglucosamine mutase (Staphylococcus aureus (strain USA300)).